Consider the following 401-residue polypeptide: Dual-specificity RNA methyltransferase RlmN (401 aa).

E114 serves as the catalytic Proton acceptor. Residues 120 to 365 (DKTRGTLCVS…TMVRRTRGDD (246 aa)) form the Radical SAM core domain. C127 and C370 are oxidised to a cystine. Residues C134, C138, and C141 each contribute to the [4Fe-4S] cluster site. S-adenosyl-L-methionine is bound by residues 187 to 188 (GE), S219, 241 to 243 (SLH), and N327. C370 acts as the S-methylcysteine intermediate in catalysis.

Belongs to the radical SAM superfamily. RlmN family. [4Fe-4S] cluster serves as cofactor.

The protein resides in the cytoplasm. It catalyses the reaction adenosine(2503) in 23S rRNA + 2 reduced [2Fe-2S]-[ferredoxin] + 2 S-adenosyl-L-methionine = 2-methyladenosine(2503) in 23S rRNA + 5'-deoxyadenosine + L-methionine + 2 oxidized [2Fe-2S]-[ferredoxin] + S-adenosyl-L-homocysteine. The catalysed reaction is adenosine(37) in tRNA + 2 reduced [2Fe-2S]-[ferredoxin] + 2 S-adenosyl-L-methionine = 2-methyladenosine(37) in tRNA + 5'-deoxyadenosine + L-methionine + 2 oxidized [2Fe-2S]-[ferredoxin] + S-adenosyl-L-homocysteine. In terms of biological role, specifically methylates position 2 of adenine 2503 in 23S rRNA and position 2 of adenine 37 in tRNAs. m2A2503 modification seems to play a crucial role in the proofreading step occurring at the peptidyl transferase center and thus would serve to optimize ribosomal fidelity. The polypeptide is Dual-specificity RNA methyltransferase RlmN (Stenotrophomonas maltophilia (strain R551-3)).